The following is a 207-amino-acid chain: ATP synthase subunit b 2 (207 aa).

The chain crosses the membrane as a helical span at residues 53-72 (TYASQLLWLVITFGVFYLLM).

Belongs to the ATPase B chain family. In terms of assembly, F-type ATPases have 2 components, F(1) - the catalytic core - and F(0) - the membrane proton channel. F(1) has five subunits: alpha(3), beta(3), gamma(1), delta(1), epsilon(1). F(0) has three main subunits: a(1), b(2) and c(10-14). The alpha and beta chains form an alternating ring which encloses part of the gamma chain. F(1) is attached to F(0) by a central stalk formed by the gamma and epsilon chains, while a peripheral stalk is formed by the delta and b chains.

The protein localises to the cell inner membrane. F(1)F(0) ATP synthase produces ATP from ADP in the presence of a proton or sodium gradient. F-type ATPases consist of two structural domains, F(1) containing the extramembraneous catalytic core and F(0) containing the membrane proton channel, linked together by a central stalk and a peripheral stalk. During catalysis, ATP synthesis in the catalytic domain of F(1) is coupled via a rotary mechanism of the central stalk subunits to proton translocation. In terms of biological role, component of the F(0) channel, it forms part of the peripheral stalk, linking F(1) to F(0). The b'-subunit is a diverged and duplicated form of b found in plants and photosynthetic bacteria. The sequence is that of ATP synthase subunit b 2 (atpF2) from Rhizobium etli (strain ATCC 51251 / DSM 11541 / JCM 21823 / NBRC 15573 / CFN 42).